A 98-amino-acid chain; its full sequence is MHGAPRLTFPCASEYLWHAREKAYQDHRRKVQSAQPLVDTRAPLTFRHLHLKLKRLKLEEERLSVIERDNRLLLEKVASVMRTRGQTDSKNNSKHRRK.

Belongs to the CFAP97 family.

This is an uncharacterized protein from Homo sapiens (Human).